Reading from the N-terminus, the 61-residue chain is Metallothionein-2 (61 aa).

The residue at position 1 (M1) is an N-acetylmethionine. The beta stretch occupies residues 1 to 29 (MDPNCSCVAGDSCTCAGSCKCKECKCTSC). Positions 5, 7, 13, 15, 19, 21, 24, 26, 29, 33, 34, 36, 37, 41, 44, 48, 50, 57, 59, and 60 each coordinate a divalent metal cation. The antigenic epitope stretch occupies residues 20–25 (KCKECK). Residues 30–61 (KKSCCSCCPVGCAKCAQGCICKGASDKCNCCA) form an alpha region.

This sequence belongs to the metallothionein superfamily. Type 1 family.

In terms of biological role, metallothioneins have a high content of cysteine residues that bind various heavy metals; these proteins are transcriptionally regulated by both heavy metals and glucocorticoids. In Macaca fascicularis (Crab-eating macaque), this protein is Metallothionein-2 (MT2).